An 861-amino-acid chain; its full sequence is Bifunctional uridylyltransferase/uridylyl-removing enzyme (861 aa).

The tract at residues 1–321 (MKNDNRIIKN…VYHQKQKIIR (321 aa)) is uridylyltransferase. The uridylyl-removing stretch occupies residues 322–678 (LDDEFQLSNR…IMPHHSQGGT (357 aa)). Residues 440-562 (VDQHTLFVIR…LPHARYLDYL (123 aa)) form the HD domain. 2 consecutive ACT domains span residues 679–760 (EVFI…AVSR) and 788–861 (QLFL…KSKY).

It belongs to the GlnD family. Requires Mg(2+) as cofactor.

The enzyme catalyses [protein-PII]-L-tyrosine + UTP = [protein-PII]-uridylyl-L-tyrosine + diphosphate. The catalysed reaction is [protein-PII]-uridylyl-L-tyrosine + H2O = [protein-PII]-L-tyrosine + UMP + H(+). Its activity is regulated as follows. Uridylyltransferase (UTase) activity is inhibited by glutamine, while glutamine activates uridylyl-removing (UR) activity. Modifies, by uridylylation and deuridylylation, the PII regulatory proteins (GlnB and homologs), in response to the nitrogen status of the cell that GlnD senses through the glutamine level. Under low glutamine levels, catalyzes the conversion of the PII proteins and UTP to PII-UMP and PPi, while under higher glutamine levels, GlnD hydrolyzes PII-UMP to PII and UMP (deuridylylation). Thus, controls uridylylation state and activity of the PII proteins, and plays an important role in the regulation of nitrogen assimilation and metabolism. The polypeptide is Bifunctional uridylyltransferase/uridylyl-removing enzyme (Legionella pneumophila (strain Corby)).